Reading from the N-terminus, the 310-residue chain is p-hydroxybenzoic acid efflux pump subunit AaeA (310 aa).

Residues alanine 12 to tyrosine 32 form a helical membrane-spanning segment.

Belongs to the membrane fusion protein (MFP) (TC 8.A.1) family.

The protein localises to the cell inner membrane. Its function is as follows. Forms an efflux pump with AaeB. In Cronobacter sakazakii (strain ATCC BAA-894) (Enterobacter sakazakii), this protein is p-hydroxybenzoic acid efflux pump subunit AaeA.